Consider the following 751-residue polypeptide: Protein CLMP1 (751 aa).

Positions 1–11 are enriched in basic residues; it reads MGKSGGRKKKS. The disordered stretch occupies residues 1–33; it reads MGKSGGRKKKSGGSNSNSSQVNSSETSGLSKPS. Over residues 12–28 the composition is skewed to low complexity; sequence GGSNSNSSQVNSSETSG. TPR repeat units follow at residues 51–84, 89–124, and 125–158; these read AHEL…IPKS, AVFH…QPGF, and TRAL…DPNH. The region spanning 290-382 is the PB1 domain; the sequence is WRPLKFVYDH…GMLRLHVVDV (93 aa). A disordered region spans residues 386-443; sequence QEPMLLEEEEEEVEEKPVIEEVISSPTESLSETEINTEKTDKEVEKEKASSSEDPETK. Positions 390 to 399 are enriched in acidic residues; sequence LLEEEEEEVE. Residues 409–419 show a composition bias toward polar residues; that stretch reads SSPTESLSETE. Basic and acidic residues predominate over residues 421 to 443; it reads NTEKTDKEVEKEKASSSEDPETK. TPR repeat units lie at residues 434–468, 481–514, and 536–570; these read ASSS…DPDA, SEAL…AFFN, and EVVA…KPDF. Basic and acidic residues predominate over residues 630 to 648; that stretch reads EQRMDDLKNPNSNKKEEVS. Residues 630–663 are disordered; that stretch reads EQRMDDLKNPNSNKKEEVSKRRKKQGGDGNEEVS.

In terms of assembly, interacts with myosin XI-K. As to expression, expressed in roots, stems, leaves, apex, flowers and seeds. Detected throughout the petiole in juvenile and young leaves, but restricted to the petiole midvein in older leaves. Expressed in hydathodes, at the base of the trichome, in the vascular cylinder of primary root and lateral root, in emerging lateral root primordia, in pollen and in developing embryos, but not in mature embryos.

It is found in the cytoplasm. Required for plastid separation and partitioning during cell division. Not involved in plastid constriction or in the organization of cytoplasmic actin cables. Contributes to polar growth of root hairs. In Arabidopsis thaliana (Mouse-ear cress), this protein is Protein CLMP1.